A 380-amino-acid polypeptide reads, in one-letter code: Cytochrome b (380 aa).

The next 4 helical transmembrane spans lie at 34–54, 78–99, 114–134, and 179–199; these read FGSL…LLAM, WLIR…YLHI, WNTG…GYVL, and FFAL…IHLT. Residues His-84 and His-98 each coordinate heme b. Heme b-binding residues include His-183 and His-197. Position 202 (His-202) interacts with a ubiquinone. The next 4 helical transmembrane spans lie at 227-247, 289-309, 321-341, and 348-368; these read LKDI…ALFS, LGGV…PFLH, LSQL…WVGS, and FIII…ILFP.

Belongs to the cytochrome b family. As to quaternary structure, the cytochrome bc1 complex contains 11 subunits: 3 respiratory subunits (MT-CYB, CYC1 and UQCRFS1), 2 core proteins (UQCRC1 and UQCRC2) and 6 low-molecular weight proteins (UQCRH/QCR6, UQCRB/QCR7, UQCRQ/QCR8, UQCR10/QCR9, UQCR11/QCR10 and a cleavage product of UQCRFS1). This cytochrome bc1 complex then forms a dimer. Heme b is required as a cofactor.

It is found in the mitochondrion inner membrane. Functionally, component of the ubiquinol-cytochrome c reductase complex (complex III or cytochrome b-c1 complex) that is part of the mitochondrial respiratory chain. The b-c1 complex mediates electron transfer from ubiquinol to cytochrome c. Contributes to the generation of a proton gradient across the mitochondrial membrane that is then used for ATP synthesis. This is Cytochrome b (MT-CYB) from Pterodroma hypoleuca (Bonin petrel).